A 194-amino-acid polypeptide reads, in one-letter code: dCTP deaminase (194 aa).

DCTP-binding positions include arginine 110–arginine 115, aspartate 128, valine 136–glutamate 138, tyrosine 171, lysine 178, and glutamine 182. The active-site Proton donor/acceptor is glutamate 138.

Belongs to the dCTP deaminase family. As to quaternary structure, homotrimer.

The enzyme catalyses dCTP + H2O + H(+) = dUTP + NH4(+). Its pathway is pyrimidine metabolism; dUMP biosynthesis; dUMP from dCTP (dUTP route): step 1/2. Catalyzes the deamination of dCTP to dUTP. In Mannheimia succiniciproducens (strain KCTC 0769BP / MBEL55E), this protein is dCTP deaminase.